A 188-amino-acid chain; its full sequence is Elongation factor P (188 aa).

It belongs to the elongation factor P family.

It is found in the cytoplasm. Its pathway is protein biosynthesis; polypeptide chain elongation. Involved in peptide bond synthesis. Stimulates efficient translation and peptide-bond synthesis on native or reconstituted 70S ribosomes in vitro. Probably functions indirectly by altering the affinity of the ribosome for aminoacyl-tRNA, thus increasing their reactivity as acceptors for peptidyl transferase. This chain is Elongation factor P, found in Rhodopseudomonas palustris (strain BisA53).